Reading from the N-terminus, the 80-residue chain is Clavanin-A (80 aa).

Residues 1-19 (MKTTILILLILGLGINAKS) form the signal peptide. A propeptide spanning residues 20-29 (LEERKSEEEK) is cleaved from the precursor. F52 carries the phenylalanine amide modification. Positions 54-80 (DDQQDNGKFYGHYAEDNGKHWYDTGDQ) are excised as a propeptide.

The protein localises to the secreted. In terms of biological role, has antimicrobial activity. The protein is Clavanin-A of Styela clava (Sea squirt).